The chain runs to 249 residues: NH(3)-dependent NAD(+) synthetase (249 aa).

Residue aspartate 34 participates in Mg(2+) binding. A deamido-NAD(+)-binding site is contributed by arginine 110. Threonine 130 serves as a coordination point for ATP. Glutamate 135 serves as a coordination point for Mg(2+). Deamido-NAD(+)-binding residues include lysine 143 and aspartate 150. Positions 159 and 181 each coordinate ATP. Deamido-NAD(+) is bound at residue 232 to 233 (HK).

The protein belongs to the NAD synthetase family. In terms of assembly, homodimer.

It catalyses the reaction deamido-NAD(+) + NH4(+) + ATP = AMP + diphosphate + NAD(+) + H(+). Its pathway is cofactor biosynthesis; NAD(+) biosynthesis; NAD(+) from deamido-NAD(+) (ammonia route): step 1/1. Catalyzes the ATP-dependent amidation of deamido-NAD to form NAD. Uses ammonia as a nitrogen source. This is NH(3)-dependent NAD(+) synthetase from Picrophilus torridus (strain ATCC 700027 / DSM 9790 / JCM 10055 / NBRC 100828 / KAW 2/3).